A 424-amino-acid polypeptide reads, in one-letter code: Probable methyltransferase EP424R (424 aa).

Residues Gln-103–Arg-315 form the Adrift-type SAM-dependent 2'-O-MTase domain. 2 residues coordinate S-adenosyl-L-methionine: Gly-135 and Asp-228. The active-site Proton acceptor is Lys-268.

The protein resides in the virion. The polypeptide is Probable methyltransferase EP424R (Ornithodoros (relapsing fever ticks)).